Here is a 490-residue protein sequence, read N- to C-terminus: Bifunctional IPC transferase and DIPP synthase (490 aa).

Residues 72–290 (LMKAVILAAG…RANRALVSAA (219 aa)) form a mobA-like NTP transferase region. CTP is bound by residues 78-80 (LAA), lysine 91, aspartate 144, and glutamate 180. Glutamate 180 contributes to the Mg(2+) binding site. Residues 291-490 (VKGSGDGFIS…VTLLAVLVSK (200 aa)) form a CDP-alcohol phosphatidyltransferases region. 4 consecutive transmembrane segments (helical) span residues 329–349 (FLVGAFSALASFFSIPLAGLL), 389–409 (FLAIIALLYPKTATVAMFAIF), 447–467 (IFLIMIFCLLSAISLQWIFWM), and 468–488 (FLFVAAISLTRVVVTLLAVLV).

It in the N-terminal section; belongs to the MobA family. In the C-terminal section; belongs to the CDP-alcohol phosphatidyltransferase class-I family. In terms of assembly, forms a mixture of monomers and dimers in solution, with prevalence of the monomeric form. Requires Mg(2+) as cofactor.

The protein localises to the membrane. It catalyses the reaction 1D-myo-inositol 3-phosphate + CTP + H(+) = CDP-1L-myo-inositol + diphosphate. The enzyme catalyses CDP-1L-myo-inositol + 1D-myo-inositol 3-phosphate = bis(1L-myo-inositol) 3,1'-phosphate 1-phosphate + CMP + H(+). Its function is as follows. Involved in biosynthesis of di-myo-inositol phosphate (DIP), a widespread organic solute in microorganisms adapted to hot environments. Catalyzes the condensation of CTP and L-myo-inositol-1-phosphate into CDP-L-myo-inositol, as well as the biosynthesis of di-myo-inositol-1,3'-phosphate-1'-phosphate (DIPP) from CDP-L-myo-inositol and L-myo-inositol-1-phosphate. The cytidylyltransferase is absolutely specific for CTP and L-myo-inositol-1-P. The DIPP synthase uses only L-myoinositol-1-phosphate as an alcohol acceptor, but CDP-glycerol, as well as CDP-L-myo-inositol and CDP-D-myoinositol, are recognized as alcohol donors. In Archaeoglobus fulgidus (strain ATCC 49558 / DSM 4304 / JCM 9628 / NBRC 100126 / VC-16), this protein is Bifunctional IPC transferase and DIPP synthase.